We begin with the raw amino-acid sequence, 185 residues long: Elongation factor P (185 aa).

This sequence belongs to the elongation factor P family.

It is found in the cytoplasm. The protein operates within protein biosynthesis; polypeptide chain elongation. Functionally, involved in peptide bond synthesis. Stimulates efficient translation and peptide-bond synthesis on native or reconstituted 70S ribosomes in vitro. Probably functions indirectly by altering the affinity of the ribosome for aminoacyl-tRNA, thus increasing their reactivity as acceptors for peptidyl transferase. This chain is Elongation factor P, found in Nitrosomonas europaea (strain ATCC 19718 / CIP 103999 / KCTC 2705 / NBRC 14298).